The following is a 244-amino-acid chain: Phosphoadenosine 5'-phosphosulfate reductase (244 aa).

Catalysis depends on Cys239, which acts as the Nucleophile; cysteine thiosulfonate intermediate.

It belongs to the PAPS reductase family. CysH subfamily.

The protein resides in the cytoplasm. It catalyses the reaction [thioredoxin]-disulfide + sulfite + adenosine 3',5'-bisphosphate + 2 H(+) = [thioredoxin]-dithiol + 3'-phosphoadenylyl sulfate. It functions in the pathway sulfur metabolism; hydrogen sulfide biosynthesis; sulfite from sulfate: step 3/3. In terms of biological role, catalyzes the formation of sulfite from phosphoadenosine 5'-phosphosulfate (PAPS) using thioredoxin as an electron donor. This chain is Phosphoadenosine 5'-phosphosulfate reductase, found in Shigella dysenteriae serotype 1 (strain Sd197).